A 1315-amino-acid polypeptide reads, in one-letter code: Tetratricopeptide repeat protein 21B (1315 aa).

TPR repeat units follow at residues 108 to 141, 145 to 178, 192 to 225, 285 to 323, 324 to 357, 492 to 525, 563 to 596, 616 to 649, 721 to 754, 756 to 788, 790 to 821, 830 to 863, 883 to 916, 918 to 950, 951 to 984, 1022 to 1055, 1196 to 1229, 1231 to 1263, and 1265 to 1298; these read RKAL…PHDS, PILK…GNDI, QNYS…QLAL, AQLF…TPQQ, AEIA…NESN, PQAV…SPSY, PLYH…PGMR, LSIF…FSGT, PRSF…NPKD, TLAR…GQQN, LCYD…EPVS, GRSQ…QARI, AEIC…CETD, KIML…DQDN, EPAT…KPDN, PGFQ…SDWG, EKSW…NRSC, KAYE…SNQT, and PAVG…HPTY.

This sequence belongs to the TTC21 family. As to quaternary structure, component of the IFT complex A (IFT-A) complex. IFT-A complex is divided into a core subcomplex composed of IFT122:IFT140:WDR19 which is associated with TULP3 and a peripheral subcomplex composed of IFT43:WDR35:TTC21B. Interacts directy with WDR35 and TTC21B. Interacts with TTC25.

Its subcellular location is the cytoplasm. It localises to the cytoskeleton. The protein resides in the cilium axoneme. Its function is as follows. Component of the IFT complex A (IFT-A), a complex required for retrograde ciliary transport and entry into cilia of G protein-coupled receptors (GPCRs). Essential for retrograde trafficking of IFT-1, IFT-B and GPCRs. Negatively modulates the SHH signal transduction. The chain is Tetratricopeptide repeat protein 21B (Ttc21b) from Mus musculus (Mouse).